Reading from the N-terminus, the 462-residue chain is Tubby-like F-box protein 7 (462 aa).

One can recognise an F-box domain in the interval 54–109 (SKWAGLPPELLRDVMKRLEEDDSNWPSRKDVVACASVCTTWRDMCKDIVRNPEFCG). 2 disordered regions span residues 317–338 (FSEF…DDVN) and 383–418 (QPSS…SSSN). Positions 383-417 (QPSSGAASEPSQAGQAAQQQTQPSQPSSSSSSSSS) are enriched in low complexity.

It belongs to the TUB family. As to expression, ubiquitous.

This is Tubby-like F-box protein 7 (TULP7) from Oryza sativa subsp. japonica (Rice).